Here is a 358-residue protein sequence, read N- to C-terminus: MRDRLLAAEKVKAIDWRDDALYLLDQRVLPFEEVWHRYTTAEGVAEAIRTMVVRGAPAIGISAAYGAVLAARARIAQGADWYPALEEDMQLLADSRPTAVNLFWALNRMRDRLMRVKDGDDPLAALEAEAVAIHLSDREANLTMAQLGADLIRKHQGNLQTVLTHCNTGALATGGFGTALGVIRAAHLEGMIERVYADETRPWLQGSRLTAWELANEGIPVTLNADSAAAHLMRTKGITWVIVGADRITANGDVANKIGTYQLAVAAMHHGVRFMVVAPSSTIDMEMASGDDIVIEERDGRELLEVGGQRVGAEVEAFNPVFDVTPADLIDAIVTEKGIVERPDTARMAQLMSRKHLH.

Residues 54 to 56 (RGA), Arg96, and Gln205 each bind substrate. Catalysis depends on Asp246, which acts as the Proton donor. Position 256–257 (256–257 (NK)) interacts with substrate.

The protein belongs to the eIF-2B alpha/beta/delta subunits family. MtnA subfamily.

It carries out the reaction 5-(methylsulfanyl)-alpha-D-ribose 1-phosphate = 5-(methylsulfanyl)-D-ribulose 1-phosphate. The protein operates within amino-acid biosynthesis; L-methionine biosynthesis via salvage pathway; L-methionine from S-methyl-5-thio-alpha-D-ribose 1-phosphate: step 1/6. Its function is as follows. Catalyzes the interconversion of methylthioribose-1-phosphate (MTR-1-P) into methylthioribulose-1-phosphate (MTRu-1-P). The polypeptide is Methylthioribose-1-phosphate isomerase (Pseudomonas syringae pv. syringae (strain B728a)).